The sequence spans 158 residues: Transcriptional repressor NrdR (158 aa).

The segment at 1–22 (MRCPFCGSDDTQVKDSRPAEDN) is disordered. The segment at 3–34 (CPFCGSDDTQVKDSRPAEDNSAIRRRRICPDC) is a zinc-finger region. The segment covering 11–22 (TQVKDSRPAEDN) has biased composition (basic and acidic residues). One can recognise an ATP-cone domain in the interval 49-139 (LTVLKKTGRK…VYRDFSHAED (91 aa)).

This sequence belongs to the NrdR family. Requires Zn(2+) as cofactor.

Its function is as follows. Negatively regulates transcription of bacterial ribonucleotide reductase nrd genes and operons by binding to NrdR-boxes. In Allorhizobium ampelinum (strain ATCC BAA-846 / DSM 112012 / S4) (Agrobacterium vitis (strain S4)), this protein is Transcriptional repressor NrdR.